The sequence spans 243 residues: MSPATPVPPDSILESPFEEMALVRGGWLWRQSSILRRWKRNWFALWLDGTLGYYHDETAQDEEDRVVIHFNVRDIKVGQECQDVQPPEGRSRDGLLTVNLREGSRLHLCAETRDDAIAWKTALMEANSTPAPAGATVPPRSRRVCPKVRCTTLSWNPCKVERRIWVRVYSPYQDYYEVVPPNAHEATYVRSYYGPPYAGPGVTHVIVREDPCYSSGAPLAMGMLAGAATGAALGSLMWSPCWF.

One can recognise a PH domain in the interval 21–128; the sequence is ALVRGGWLWR…WKTALMEANS (108 aa).

In terms of assembly, binds transducins. Homodimer. Interacts (via PH domain) with MYO1C. Interacts (via PH domain) with MYO7A. As to expression, highly expressed in retina and brain. In retina, abundantly expressed in photoreceptors. Isoform 4 is the predominant isoform expressed in mature olfactory receptor neurons and vestibular and cochlear hair cells. Also expressed in cells with possible sensory function, including peripheral retinal ganglion cells, cochlear interdental cells, and neurons of the circumventricular organ (at protein level).

The protein localises to the membrane. Its subcellular location is the cytoplasm. The protein is Pleckstrin homology domain-containing family B member 1 (Plekhb1) of Mus musculus (Mouse).